A 567-amino-acid polypeptide reads, in one-letter code: Geranylgeranyl transferase type-2 subunit alpha (567 aa).

PFTA repeat units lie at residues 44–78 (LDES…QLET), 88–122 (LVKA…RLPE), 124–158 (NWAR…QAAV), 159–193 (APAE…QLHP), 207–241 (VLLR…RAEP), and 363–397 (VLQS…ALDP). Phosphoserine is present on Ser-98. LRR repeat units follow at residues 442-463 (DVRV…EQLL), 464-486 (LVTH…AALR), 487-508 (CLEV…ANLP), 509-530 (RLRE…QTLA), and 534-555 (RLVF…RERL).

This sequence belongs to the protein prenyltransferase subunit alpha family. As to quaternary structure, heterotrimer composed of RABGGTA, RABGGTB and CHM; within this trimer, RABGGTA and RABGGTB form the catalytic component B, while CHM (component A) mediates peptide substrate binding. The Rab GGTase dimer (RGGT) interacts with CHM (component A) prior to Rab protein binding; the association is stabilized by geranylgeranyl pyrophosphate (GGpp). The CHM:RGGT:Rab complex is destabilized by GGpp. Interacts with non-phosphorylated form of RAB8A; phosphorylation of RAB8A at 'Thr-72' disrupts this interaction.

The enzyme catalyses geranylgeranyl diphosphate + L-cysteinyl-[protein] = S-geranylgeranyl-L-cysteinyl-[protein] + diphosphate. Its activity is regulated as follows. The enzymatic reaction requires the aid of a Rab escort protein (also called component A), such as CHM. Its function is as follows. Catalyzes the transfer of a geranylgeranyl moiety from geranylgeranyl diphosphate to both cysteines of Rab proteins with the C-terminal sequence -XXCC, -XCXC and -CCXX, such as RAB1A, RAB3A, RAB5A and RAB7A. This chain is Geranylgeranyl transferase type-2 subunit alpha (Rabggta), found in Mus musculus (Mouse).